A 159-amino-acid chain; its full sequence is Large ribosomal subunit protein eL29 (159 aa).

Over residues 1 to 26 (MAKSKNHTTHNQSRKWHRNGIKKPRS) the composition is skewed to basic residues. The tract at residues 1–32 (MAKSKNHTTHNQSRKWHRNGIKKPRSQRYESL) is disordered. K5 is modified (N6-methyllysine). Position 31 is a phosphoserine (S31). K33 carries the post-translational modification N6-acetyllysine. The span at 117 to 127 (RLCRPKAKAKA) shows a compositional bias: basic residues. Residues 117–159 (RLCRPKAKAKAKAKDQTKAQAAAPASVPAQAPKRTQAPTKASE) are disordered. Over residues 134–149 (KAQAAAPASVPAQAPK) the composition is skewed to low complexity. S142 is subject to Phosphoserine.

It belongs to the eukaryotic ribosomal protein eL29 family. As to quaternary structure, component of the large ribosomal subunit.

The protein resides in the cytoplasm. Functionally, component of the large ribosomal subunit. The ribosome is a large ribonucleoprotein complex responsible for the synthesis of proteins in the cell. The sequence is that of Large ribosomal subunit protein eL29 (RPL29) from Homo sapiens (Human).